A 113-amino-acid polypeptide reads, in one-letter code: MYYKFSSFTQKLAGAWASEAYTPQGLKPVSTEAPPIIFATPTKLTSSVTAYDYSGKNKVPELQKFFQKADGVPIHLKRGLPDQMLYRTTMALTLGGTIYCLIALYMASQPRNK.

The transit peptide at 1–54 (MYYKFSSFTQKLAGAWASEAYTPQGLKPVSTEAPPIIFATPTKLTSSVTAYDYS) directs the protein to the mitochondrion. Position 68 is an N6-acetyllysine (K68). Residues 81–106 (PDQMLYRTTMALTLGGTIYCLIALYM) form a helical membrane-spanning segment.

Belongs to the cytochrome c oxidase VIIa family. In terms of assembly, interacts with the mitochondrial respiratory complexes III (CIII) and IV (CIV), promoting their association.

The protein resides in the mitochondrion inner membrane. The protein operates within energy metabolism; oxidative phosphorylation. Assembly factor that mediates the formation of some mitochondrial respiratory supercomplexes (respirasomes), thereby promoting oxidative phosphorylation and energy metabolism. Acts as a molecular adapter that associates with both mitochondrial respiratory complexes III (CIII) and IV (CIV), promoting their association. Mediates the formation of various mitochondrial respiratory supercomplexes, such as MCIII(2)IV(2), composed of two CIII and two CIV, and the CS-respirasome (MCI(1)III(2)IV(2)), composed of one CI, two CIII and two CIV. Not involved in the formation of the canonical respirasome (MCI(1)III(2)IV(1)), composed of one CI, two CIII and one CIV. The formation of different respirasomes is important for cell adaptation to oxygen conditions and prevent metabolic exhaustion: supercomplexes mediated by COX7A2L/SCAF1 are required to maintain oxidative phosphorylation upon low oxygen conditions and promote metabolic rewiring toward glycolysis. In Mus musculus (Mouse), this protein is Cytochrome c oxidase subunit 7A2-like, mitochondrial.